The chain runs to 184 residues: ATP synthase subunit b, chloroplastic (184 aa).

A helical transmembrane segment spans residues 27–49 (LATNPINLSVVLGVLIFFGKGVL).

It belongs to the ATPase B chain family. F-type ATPases have 2 components, F(1) - the catalytic core - and F(0) - the membrane proton channel. F(1) has five subunits: alpha(3), beta(3), gamma(1), delta(1), epsilon(1). F(0) has four main subunits: a(1), b(1), b'(1) and c(10-14). The alpha and beta chains form an alternating ring which encloses part of the gamma chain. F(1) is attached to F(0) by a central stalk formed by the gamma and epsilon chains, while a peripheral stalk is formed by the delta, b and b' chains.

The protein resides in the plastid. Its subcellular location is the chloroplast thylakoid membrane. In terms of biological role, f(1)F(0) ATP synthase produces ATP from ADP in the presence of a proton or sodium gradient. F-type ATPases consist of two structural domains, F(1) containing the extramembraneous catalytic core and F(0) containing the membrane proton channel, linked together by a central stalk and a peripheral stalk. During catalysis, ATP synthesis in the catalytic domain of F(1) is coupled via a rotary mechanism of the central stalk subunits to proton translocation. Its function is as follows. Component of the F(0) channel, it forms part of the peripheral stalk, linking F(1) to F(0). The sequence is that of ATP synthase subunit b, chloroplastic from Nicotiana tomentosiformis (Tobacco).